A 357-amino-acid chain; its full sequence is S-adenosylmethionine:tRNA ribosyltransferase-isomerase (357 aa).

It belongs to the QueA family. In terms of assembly, monomer.

Its subcellular location is the cytoplasm. The catalysed reaction is 7-aminomethyl-7-carbaguanosine(34) in tRNA + S-adenosyl-L-methionine = epoxyqueuosine(34) in tRNA + adenine + L-methionine + 2 H(+). The protein operates within tRNA modification; tRNA-queuosine biosynthesis. In terms of biological role, transfers and isomerizes the ribose moiety from AdoMet to the 7-aminomethyl group of 7-deazaguanine (preQ1-tRNA) to give epoxyqueuosine (oQ-tRNA). The sequence is that of S-adenosylmethionine:tRNA ribosyltransferase-isomerase from Phenylobacterium zucineum (strain HLK1).